A 172-amino-acid chain; its full sequence is Small ribosomal subunit protein uS5 (172 aa).

One can recognise an S5 DRBM domain in the interval 7-70 (VVEHLVNVNR…QNAKKYMIEV (64 aa)).

It belongs to the universal ribosomal protein uS5 family. Part of the 30S ribosomal subunit. Contacts proteins S4 and S8.

With S4 and S12 plays an important role in translational accuracy. Its function is as follows. Located at the back of the 30S subunit body where it stabilizes the conformation of the head with respect to the body. This is Small ribosomal subunit protein uS5 from Orientia tsutsugamushi (strain Boryong) (Rickettsia tsutsugamushi).